We begin with the raw amino-acid sequence, 1320 residues long: Junctional cadherin 5-associated protein (1320 aa).

Disordered regions lie at residues 1 to 124, 183 to 202, 209 to 233, 252 to 426, 452 to 492, 676 to 720, 741 to 802, and 835 to 942; these read MYSV…GSGS, KKPR…KRPQ, YPFV…ALSP, GVPK…SIQY, DDTS…NEQS, ASSP…PTPT, NQKP…STTG, and ELQE…QKSQ. Composition is skewed to polar residues over residues 58–71 and 95–107; these read RTSL…NSEN and NQPS…QPQS. Over residues 108-119 the composition is skewed to basic and acidic residues; that stretch reads GRDDIYWSRGRQ. Positions 255-267 are enriched in pro residues; it reads KVPPYPPSFPSPS. A compositionally biased stretch (basic and acidic residues) spans 308 to 329; the sequence is FQDHQHRDPRGSYPTRSKDPSH. Over residues 338–356 the composition is skewed to pro residues; sequence LEPPVYVPPPSYRSPPQHI. The segment covering 369-378 has biased composition (polar residues); the sequence is VSSNQSQQQV. The segment covering 404–415 has biased composition (pro residues); that stretch reads GSPPQGLPPQPY. Residues 454–465 show a composition bias toward polar residues; sequence TSYNPGLLTTQE. Thr-484 carries the post-translational modification Phosphothreonine. Ser-486 bears the Phosphoserine mark. The span at 741 to 782 shows a compositional bias: polar residues; sequence NQKPSVPHLQGQTSLSPSRNSAFSRTSSAINQASMSKGTSDQ. A compositionally biased stretch (acidic residues) spans 849–859; sequence EDSEAEQPEDC. Ser-851 is subject to Phosphoserine. Polar residues predominate over residues 865-877; the sequence is KSWALQGTRTAQQ. Residues Ser-1027 and Ser-1033 each carry the phosphoserine modification. Disordered regions lie at residues 1085–1116 and 1153–1174; these read ARRT…SLAL and SDVD…KDEE. Phosphoserine occurs at positions 1245 and 1248. A disordered region spans residues 1275-1320; sequence DEAWQAGHLPSVSQNENGHPEVPRDKMSDQDLWCADSYDPSRVERV. Over residues 1292-1303 the composition is skewed to basic and acidic residues; that stretch reads GHPEVPRDKMSD.

The protein localises to the cell junction. The protein resides in the adherens junction. This is Junctional cadherin 5-associated protein from Mus musculus (Mouse).